A 428-amino-acid polypeptide reads, in one-letter code: tRNA(Ile)-lysidine synthase (428 aa).

Residue 28 to 33 participates in ATP binding; the sequence is SGGVDS.

This sequence belongs to the tRNA(Ile)-lysidine synthase family.

The protein resides in the cytoplasm. The enzyme catalyses cytidine(34) in tRNA(Ile2) + L-lysine + ATP = lysidine(34) in tRNA(Ile2) + AMP + diphosphate + H(+). Functionally, ligates lysine onto the cytidine present at position 34 of the AUA codon-specific tRNA(Ile) that contains the anticodon CAU, in an ATP-dependent manner. Cytidine is converted to lysidine, thus changing the amino acid specificity of the tRNA from methionine to isoleucine. In Streptococcus pyogenes serotype M3 (strain ATCC BAA-595 / MGAS315), this protein is tRNA(Ile)-lysidine synthase.